The chain runs to 316 residues: Aspartate carbamoyltransferase catalytic subunit (316 aa).

2 residues coordinate carbamoyl phosphate: R66 and T67. An L-aspartate-binding site is contributed by K94. Positions 116, 146, and 149 each coordinate carbamoyl phosphate. Positions 180 and 235 each coordinate L-aspartate. 2 residues coordinate carbamoyl phosphate: G276 and P277.

It belongs to the aspartate/ornithine carbamoyltransferase superfamily. ATCase family. As to quaternary structure, heterododecamer (2C3:3R2) of six catalytic PyrB chains organized as two trimers (C3), and six regulatory PyrI chains organized as three dimers (R2).

The enzyme catalyses carbamoyl phosphate + L-aspartate = N-carbamoyl-L-aspartate + phosphate + H(+). It functions in the pathway pyrimidine metabolism; UMP biosynthesis via de novo pathway; (S)-dihydroorotate from bicarbonate: step 2/3. Functionally, catalyzes the condensation of carbamoyl phosphate and aspartate to form carbamoyl aspartate and inorganic phosphate, the committed step in the de novo pyrimidine nucleotide biosynthesis pathway. The chain is Aspartate carbamoyltransferase catalytic subunit from Stenotrophomonas maltophilia (strain R551-3).